Here is a 336-residue protein sequence, read N- to C-terminus: 4-hydroxy-2-oxovalerate aldolase (336 aa).

In terms of domain architecture, Pyruvate carboxyltransferase spans 5–255 (IRIIDSTLRD…ETGVDLYKIM (251 aa)). 13–14 (RD) provides a ligand contact to substrate. A Mn(2+)-binding site is contributed by Asp-14. The active-site Proton acceptor is His-17. Ser-167 and His-194 together coordinate substrate. 2 residues coordinate Mn(2+): His-194 and His-196. Residue Tyr-285 coordinates substrate.

The protein belongs to the 4-hydroxy-2-oxovalerate aldolase family.

The catalysed reaction is (S)-4-hydroxy-2-oxopentanoate = acetaldehyde + pyruvate. The protein is 4-hydroxy-2-oxovalerate aldolase (mhpE) of Carboxydothermus hydrogenoformans (strain ATCC BAA-161 / DSM 6008 / Z-2901).